The chain runs to 235 residues: Transmembrane protein 176A (235 aa).

A Phosphoserine modification is found at Ser38. The next 4 helical transmembrane spans lie at 55–75 (VASW…GGFF), 86–106 (SGAA…AFIY), 113–133 (YWAL…IAAL), and 193–213 (AMLL…LWLY).

This sequence belongs to the TMEM176 family. As to quaternary structure, interacts with MCOLN2.

Its subcellular location is the membrane. This is Transmembrane protein 176A (TMEM176A) from Homo sapiens (Human).